A 643-amino-acid chain; its full sequence is Threonine--tRNA ligase (643 aa).

Positions 1-61 (MPIITLPDGS…EQDATLEIIT (61 aa)) constitute a TGS domain. Residues 243-534 (DHRKIGKALD…ITEEYAGFFP (292 aa)) form a catalytic region. Zn(2+) contacts are provided by cysteine 334, histidine 385, and histidine 511.

The protein belongs to the class-II aminoacyl-tRNA synthetase family. As to quaternary structure, homodimer. Zn(2+) serves as cofactor.

It is found in the cytoplasm. It catalyses the reaction tRNA(Thr) + L-threonine + ATP = L-threonyl-tRNA(Thr) + AMP + diphosphate + H(+). In terms of biological role, catalyzes the attachment of threonine to tRNA(Thr) in a two-step reaction: L-threonine is first activated by ATP to form Thr-AMP and then transferred to the acceptor end of tRNA(Thr). Also edits incorrectly charged L-seryl-tRNA(Thr). The polypeptide is Threonine--tRNA ligase (Haemophilus influenzae (strain ATCC 51907 / DSM 11121 / KW20 / Rd)).